The chain runs to 724 residues: MSKDQIPVENLTELEASSELAFLAAELARHDALYHGKDAPEISDADYDALKRRNDAIEAAFPALVRADSPSKKVGFTPLPTFAPIVHARPMLSLDNTFSEEDLRDFVSSVYRFLGHLPDDSIAFTAEPKIDGLSMSIRYENRKLKTAATRGDGTTGENVTANIRTIKEIPNELPADAPDVVEVRGEVYMAKSDFLALNAQMEADGKQTYVNPRNTASGSLRQLDANVTAKRKLRFFAYALGEVSNGGQPARIADTQYGIVEKFREWGFPVNPLMKRFTSAQQLLEHYNEIGVARPDLDYDIDGVVYKVDRLDLQERLGFRSRSPRWATAHKFPAEQAFTTVENIEIQVGRTGALTPVARLTPITVGGVVVTNATLHNADYIEGIGNSGERIRPEDHDIRIGDTVIVQRAGDVIPQVLDVLLEKRAAGAAKYVFPEKCPVCGSHAVRERNEKTGKLDSVTRCTGGFVCRAQAVEHLKHFVSRNAFDIEGLGTKQIDFFFESDDPALSIKTAPDIFTLKARQEASHLTKLENIDGFGKVSVKKLFDAIDARRAIDLHRLIFALGIRHVGETTAKLLARSYGTYEHFEKAMKAAADPASDAWAELNSIDGIGEVVARAIIEFYKEPRNLDVIDRLIRELQPKEAEKPSTEGSPVAGKTVVFTGSLEKFTRDEAKARAESLGAKVAGSVSKKTDILVAGPGAGSKLAKATELGVQTMDEDEWLALIGG.

Residues aspartate 44–aspartate 48, serine 93–leucine 94, and glutamate 127 contribute to the NAD(+) site. Lysine 129 (N6-AMP-lysine intermediate) is an active-site residue. Residues arginine 150, glutamate 186, lysine 307, and lysine 331 each coordinate NAD(+). Positions 437, 440, 461, and 467 each coordinate Zn(2+). The BRCT domain occupies threonine 646–glycine 724.

The protein belongs to the NAD-dependent DNA ligase family. LigA subfamily. It depends on Mg(2+) as a cofactor. Requires Mn(2+) as cofactor.

It carries out the reaction NAD(+) + (deoxyribonucleotide)n-3'-hydroxyl + 5'-phospho-(deoxyribonucleotide)m = (deoxyribonucleotide)n+m + AMP + beta-nicotinamide D-nucleotide.. Its function is as follows. DNA ligase that catalyzes the formation of phosphodiester linkages between 5'-phosphoryl and 3'-hydroxyl groups in double-stranded DNA using NAD as a coenzyme and as the energy source for the reaction. It is essential for DNA replication and repair of damaged DNA. This is DNA ligase from Agrobacterium fabrum (strain C58 / ATCC 33970) (Agrobacterium tumefaciens (strain C58)).